The following is a 371-amino-acid chain: Chaperone protein DnaJ (371 aa).

The J domain occupies 4–68 (DYYKILGVSK…QKRAAYDRFG (65 aa)). Residues 134-212 (GIEKNISFSS…CHGMGRCHKQ (79 aa)) form a CR-type zinc finger. Zn(2+)-binding residues include cysteine 147, cysteine 150, cysteine 164, cysteine 167, cysteine 186, cysteine 189, cysteine 200, and cysteine 203. 4 CXXCXGXG motif repeats span residues 147 to 154 (CDTCHGSG), 164 to 171 (CDACGGVG), 186 to 193 (CHKCKGNG), and 200 to 207 (CKKCHGMG).

It belongs to the DnaJ family. Homodimer. Zn(2+) serves as cofactor.

The protein resides in the cytoplasm. In terms of biological role, participates actively in the response to hyperosmotic and heat shock by preventing the aggregation of stress-denatured proteins and by disaggregating proteins, also in an autonomous, DnaK-independent fashion. Unfolded proteins bind initially to DnaJ; upon interaction with the DnaJ-bound protein, DnaK hydrolyzes its bound ATP, resulting in the formation of a stable complex. GrpE releases ADP from DnaK; ATP binding to DnaK triggers the release of the substrate protein, thus completing the reaction cycle. Several rounds of ATP-dependent interactions between DnaJ, DnaK and GrpE are required for fully efficient folding. Also involved, together with DnaK and GrpE, in the DNA replication of plasmids through activation of initiation proteins. The chain is Chaperone protein DnaJ from Rickettsia akari (strain Hartford).